The primary structure comprises 353 residues: Rhodopsin (353 aa).

Over 1–36 (MNGTEGPYFYIPMVNTTGIVRSPYEYPQYYLVNPAA) the chain is Extracellular. N2 and N15 each carry an N-linked (GlcNAc...) asparagine glycan. The helical transmembrane segment at 37-61 (YAALGAYMFLLILIGFPVNFLTLYV) threads the bilayer. Over 62-73 (TIEHKKLRTPLN) the chain is Cytoplasmic. Residues 74 to 96 (YILLNLAVADLFMVFGGFTTTMY) form a helical membrane-spanning segment. The Extracellular portion of the chain corresponds to 97–110 (TSMHGYFVLGRLGC). Cysteines 110 and 187 form a disulfide. A helical transmembrane segment spans residues 111 to 133 (NLEGFFATLGGEIALWSLVVLAV). Positions 134–136 (ERW) match the 'Ionic lock' involved in activated form stabilization motif. At 134 to 152 (ERWMVVCKPISNFRFGEDH) the chain is on the cytoplasmic side. A helical membrane pass occupies residues 153–173 (AIMGLAFTWVMAAACAVPPLV). Over 174–202 (GWSRYIPEGMQCSCGIDYYTRAEGFNNES) the chain is Extracellular. The N-linked (GlcNAc...) asparagine glycan is linked to N200. A helical transmembrane segment spans residues 203–224 (FVIYMFVCHFLIPLVVVFFCYG). The Cytoplasmic segment spans residues 225–252 (RLLCAVKEAAAAQQESETTQRAEREVSR). A helical transmembrane segment spans residues 253–274 (MVVIMVVAFLVCWCPYAGVAWY). Residues 275–286 (IFTHQGSEFGPL) are Extracellular-facing. The helical transmembrane segment at 287-308 (FMTFPAFFAKSSSIYNPMIYIC) threads the bilayer. K296 is modified (N6-(retinylidene)lysine). Topologically, residues 309–353 (MNKQFRQCMITTLCCGKNPFEEEEGASTTSKTEASSVSSSSVSPA) are cytoplasmic. Residues C322 and C323 are each lipidated (S-palmitoyl cysteine). Positions 329-353 (EEEEGASTTSKTEASSVSSSSVSPA) are disordered. Residues 334–353 (ASTTSKTEASSVSSSSVSPA) are compositionally biased toward low complexity.

Belongs to the G-protein coupled receptor 1 family. Opsin subfamily. In terms of processing, phosphorylated on some or all of the serine and threonine residues present in the C-terminal region. Contains one covalently linked retinal chromophore.

It is found in the membrane. The protein resides in the cell projection. It localises to the cilium. The protein localises to the photoreceptor outer segment. In terms of biological role, photoreceptor required for image-forming vision at low light intensity. While most salt water fish species use retinal as chromophore, most freshwater fish use 3-dehydroretinal, or a mixture of retinal and 3-dehydroretinal. Light-induced isomerization of 11-cis to all-trans retinal triggers a conformational change that activates signaling via G-proteins. Subsequent receptor phosphorylation mediates displacement of the bound G-protein alpha subunit by arrestin and terminates signaling. This Chelon auratus (Golden grey mullet) protein is Rhodopsin (rho).